Reading from the N-terminus, the 141-residue chain is MAKKVEKLVKLQIPAGKATPAPPVGPALGQAGINIMGFTKEFNARTADQAGMIIPVVISVYEDKSFDFITKTPPAAVLLKKAAGVEKGSGTPNTTKVATVTRAQVQEIAETKMPDLNAANIEAAMRMIEGTARSMGFTVTD.

The protein belongs to the universal ribosomal protein uL11 family. As to quaternary structure, part of the ribosomal stalk of the 50S ribosomal subunit. Interacts with L10 and the large rRNA to form the base of the stalk. L10 forms an elongated spine to which L12 dimers bind in a sequential fashion forming a multimeric L10(L12)X complex. In terms of processing, one or more lysine residues are methylated.

Forms part of the ribosomal stalk which helps the ribosome interact with GTP-bound translation factors. The polypeptide is Large ribosomal subunit protein uL11 (Streptococcus pyogenes serotype M1).